We begin with the raw amino-acid sequence, 440 residues long: UDP-N-acetylmuramoylalanine--D-glutamate ligase (440 aa).

Gly-109–Thr-115 serves as a coordination point for ATP.

This sequence belongs to the MurCDEF family.

It localises to the cytoplasm. The catalysed reaction is UDP-N-acetyl-alpha-D-muramoyl-L-alanine + D-glutamate + ATP = UDP-N-acetyl-alpha-D-muramoyl-L-alanyl-D-glutamate + ADP + phosphate + H(+). It participates in cell wall biogenesis; peptidoglycan biosynthesis. Its function is as follows. Cell wall formation. Catalyzes the addition of glutamate to the nucleotide precursor UDP-N-acetylmuramoyl-L-alanine (UMA). The sequence is that of UDP-N-acetylmuramoylalanine--D-glutamate ligase from Rubrobacter xylanophilus (strain DSM 9941 / JCM 11954 / NBRC 16129 / PRD-1).